The chain runs to 425 residues: UPF0597 protein Moth_1414 (425 aa).

Belongs to the UPF0597 family.

The protein is UPF0597 protein Moth_1414 of Moorella thermoacetica (strain ATCC 39073 / JCM 9320).